The following is a 42-amino-acid chain: VEWTDAERSAILSLWGKIDTDELGPALLARLXLVXXXTQRYF.

The 41-residue stretch at 2–42 (EWTDAERSAILSLWGKIDTDELGPALLARLXLVXXXTQRYF) folds into the Globin domain.

The protein belongs to the globin family. Heterotetramer of two alpha chains and two beta chains. As to expression, red blood cells.

Involved in oxygen transport from gills to the various peripheral tissues. The sequence is that of Hemoglobin subunit beta-A from Catostomus clarkii (Desert sucker).